We begin with the raw amino-acid sequence, 430 residues long: Enolase (430 aa).

A (2R)-2-phosphoglycerate-binding site is contributed by glutamine 163. Glutamate 205 functions as the Proton donor in the catalytic mechanism. Positions 242, 287, and 314 each coordinate Mg(2+). (2R)-2-phosphoglycerate-binding residues include lysine 339, arginine 368, serine 369, and lysine 390. Catalysis depends on lysine 339, which acts as the Proton acceptor.

It belongs to the enolase family. Mg(2+) is required as a cofactor.

The protein localises to the cytoplasm. It localises to the secreted. The protein resides in the cell surface. It carries out the reaction (2R)-2-phosphoglycerate = phosphoenolpyruvate + H2O. Its pathway is carbohydrate degradation; glycolysis; pyruvate from D-glyceraldehyde 3-phosphate: step 4/5. In terms of biological role, catalyzes the reversible conversion of 2-phosphoglycerate (2-PG) into phosphoenolpyruvate (PEP). It is essential for the degradation of carbohydrates via glycolysis. The sequence is that of Enolase from Geobacillus kaustophilus (strain HTA426).